The chain runs to 247 residues: PF03932 family protein CutC (247 aa).

This sequence belongs to the CutC family.

The protein localises to the cytoplasm. This chain is PF03932 family protein CutC, found in Klebsiella pneumoniae (strain 342).